Reading from the N-terminus, the 461-residue chain is 23S rRNA (uracil(1939)-C(5))-methyltransferase RlmD (461 aa).

The segment at 1-26 (MAKHERGLRFQPTGGSKAPQIPTGKK) is disordered. The TRAM domain maps to 20 to 78 (QIPTGKKQRLSIERLANDGRGIAFFEGKTWFVLGALAGEEVEARVLGAHGKVVEARTER). Residues C91, C97, C100, and C179 each contribute to the [4Fe-4S] cluster site. S-adenosyl-L-methionine-binding residues include Q283, F312, N317, E333, D360, and D381. C407 functions as the Nucleophile in the catalytic mechanism.

It belongs to the class I-like SAM-binding methyltransferase superfamily. RNA M5U methyltransferase family. RlmD subfamily.

The enzyme catalyses uridine(1939) in 23S rRNA + S-adenosyl-L-methionine = 5-methyluridine(1939) in 23S rRNA + S-adenosyl-L-homocysteine + H(+). Catalyzes the formation of 5-methyl-uridine at position 1939 (m5U1939) in 23S rRNA. The polypeptide is 23S rRNA (uracil(1939)-C(5))-methyltransferase RlmD (Pseudomonas fluorescens (strain Pf0-1)).